Reading from the N-terminus, the 282-residue chain is 4-hydroxybenzoate octaprenyltransferase (282 aa).

Transmembrane regions (helical) follow at residues Ile17–Phe37, Ile40–Ile60, Ala90–Ile110, Phe113–Leu133, Ala135–Ser155, Phe163–Met183, Leu207–Lys227, Trp231–Ile251, and Ala262–Ile282.

The protein belongs to the UbiA prenyltransferase family. Mg(2+) is required as a cofactor.

It localises to the cell inner membrane. It catalyses the reaction all-trans-octaprenyl diphosphate + 4-hydroxybenzoate = 4-hydroxy-3-(all-trans-octaprenyl)benzoate + diphosphate. It functions in the pathway cofactor biosynthesis; ubiquinone biosynthesis. Functionally, catalyzes the prenylation of para-hydroxybenzoate (PHB) with an all-trans polyprenyl group. Mediates the second step in the final reaction sequence of ubiquinone-8 (UQ-8) biosynthesis, which is the condensation of the polyisoprenoid side chain with PHB, generating the first membrane-bound Q intermediate 3-octaprenyl-4-hydroxybenzoate. This is 4-hydroxybenzoate octaprenyltransferase from Legionella pneumophila subsp. pneumophila (strain Philadelphia 1 / ATCC 33152 / DSM 7513).